Consider the following 599-residue polypeptide: MFS-type transporter ucsM (599 aa).

Residues 23-34 (AHHHGKEREAHR) are compositionally biased toward basic and acidic residues. The tract at residues 23–42 (AHHHGKEREAHRQSLSSVPG) is disordered. Helical transmembrane passes span 147-167 (VALG…GAWL), 178-198 (ILIG…GAVP), 204-224 (GKGT…AGLF), 263-283 (IMLI…ATVY), 291-311 (WLAF…LWYL), 386-406 (IFLY…ILPS), 424-444 (FNPI…YPAL), and 454-474 (ISRI…SSLV). Asn-517 is a glycosylation site (N-linked (GlcNAc...) asparagine). Helical transmembrane passes span 539–559 (LFLF…PAIV) and 563–583 (LVWV…IFWV).

The protein belongs to the major facilitator superfamily. Proton-dependent oligopeptide transporter (POT/PTR) (TC 2.A.17) family.

It localises to the membrane. In terms of biological role, MFS-type transporter; part of the gene cluster that mediates the biosynthesis of UCS1025A, a member of the pyrrolizidinone family that acts as a strong telomerase inhibitor and displays potent antibacterial and antitumor properties. These compounds share a hemiaminal-containing pyrrolizidinone core fused with a gamma-lactone, giving a furopyrrolizidine that is connected to a decalin fragment. The chain is MFS-type transporter ucsM from Acremonium sp.